The sequence spans 119 residues: Beta-2-microglobulin (119 aa).

The N-terminal stretch at 1-20 (MARSVVVALLVLLSLSGLEA) is a signal peptide. Residues 25-114 (PKIQVYSRHP…VTFPTPKTVK (90 aa)) form the Ig-like C1-type domain. C45 and C100 form a disulfide bridge.

Belongs to the beta-2-microglobulin family. In terms of assembly, heterodimer of an alpha chain and a beta chain. Beta-2-microglobulin is the beta-chain of major histocompatibility complex class I molecules.

Its subcellular location is the secreted. Its function is as follows. Component of the class I major histocompatibility complex (MHC). Involved in the presentation of peptide antigens to the immune system. This chain is Beta-2-microglobulin (B2M), found in Lagothrix lagotricha (Brown woolly monkey).